The primary structure comprises 135 residues: Calcium-binding protein KIC (135 aa).

The region spanning 74–109 (MSKEDAQGMVREGDLDGDGALNQTEFCVLMVRLSPE) is the EF-hand domain. Positions 87, 89, 91, and 98 each coordinate Ca(2+).

Interacts with KCBP (via C-terminus). KIC and calmodulin show competitive binding to KCBP. Interacts with CML42. Binds to ABCG36. In terms of tissue distribution, expressed in stems, leaves and flowers.

Functionally, calcium-binding regulatory protein that interacts with kinesin motor protein KCBP in a calcium-dependent manner. Inhibits KCBP microtubule binding activity and microtubule-stimulated ATPase activity. Involved in the regulation of trichome branching through its interaction with KCBP. The sequence is that of Calcium-binding protein KIC from Arabidopsis thaliana (Mouse-ear cress).